Here is a 620-residue protein sequence, read N- to C-terminus: Chaperone protein HscA homolog (620 aa).

This sequence belongs to the heat shock protein 70 family.

Chaperone involved in the maturation of iron-sulfur cluster-containing proteins. Has a low intrinsic ATPase activity which is markedly stimulated by HscB. The chain is Chaperone protein HscA homolog from Shewanella loihica (strain ATCC BAA-1088 / PV-4).